Consider the following 299-residue polypeptide: Elongation factor Ts (299 aa).

Residues 81-84 (TDFV) form an involved in Mg(2+) ion dislocation from EF-Tu region.

The protein belongs to the EF-Ts family.

Its subcellular location is the cytoplasm. In terms of biological role, associates with the EF-Tu.GDP complex and induces the exchange of GDP to GTP. It remains bound to the aminoacyl-tRNA.EF-Tu.GTP complex up to the GTP hydrolysis stage on the ribosome. The polypeptide is Elongation factor Ts (Halothermothrix orenii (strain H 168 / OCM 544 / DSM 9562)).